The following is a 513-amino-acid chain: Putative BTB/POZ domain-containing protein L55 (513 aa).

In terms of domain architecture, BTB spans 11–83; sequence SPIKIILQDI…FHGYKMEISD (73 aa).

The protein belongs to the mimivirus BTB/WD family.

This Acanthamoeba polyphaga (Amoeba) protein is Putative BTB/POZ domain-containing protein L55.